Here is a 365-residue protein sequence, read N- to C-terminus: MASMWAPEHSAEAHSNLSSTTDDCGSVSVAFPITMMVTGFVGNALAMLLVSRSYRRRESKRKKSFLLCIGWLALTDLVGQLLTSPVVILVYLSQRRWEQLDPSGRLCTFFGLTMTVFGLSSLLVASAMAVERALAIRAPHWYASHMKTRATPVLLGVWLSVLAFALLPVLGVGRYSVQWPGTWCFISTGPAGNETDPAREPGSVAFASAFACLGLLALVVTFACNLATIKALVSRCRAKAAVSQSSAQWGRITTETAIQLMGIMCVLSVCWSPLLIMMLKMIFNQMSVEQCKTQMGKEKECNSFLIAVRLASLNQILDPWVYLLLRKILLRKFCQIRDHTNYASSSTSLPCPGSSALMWSDQLER.

A disordered region spans residues 1-22; it reads MASMWAPEHSAEAHSNLSSTTD. Residues 1 to 30 lie on the Extracellular side of the membrane; the sequence is MASMWAPEHSAEAHSNLSSTTDDCGSVSVA. Over residues 13-22 the composition is skewed to polar residues; it reads AHSNLSSTTD. Asparagine 16 carries N-linked (GlcNAc...) asparagine glycosylation. A helical membrane pass occupies residues 31–55; the sequence is FPITMMVTGFVGNALAMLLVSRSYR. The Cytoplasmic portion of the chain corresponds to 56–68; the sequence is RRESKRKKSFLLC. A helical transmembrane segment spans residues 69 to 89; it reads IGWLALTDLVGQLLTSPVVIL. The Extracellular segment spans residues 90–108; that stretch reads VYLSQRRWEQLDPSGRLCT. Residues cysteine 107 and cysteine 184 are joined by a disulfide bond. The helical transmembrane segment at 109–130 threads the bilayer; that stretch reads FFGLTMTVFGLSSLLVASAMAV. Topologically, residues 131 to 151 are cytoplasmic; that stretch reads ERALAIRAPHWYASHMKTRAT. A helical membrane pass occupies residues 152–173; sequence PVLLGVWLSVLAFALLPVLGVG. The Extracellular segment spans residues 174–203; that stretch reads RYSVQWPGTWCFISTGPAGNETDPAREPGS. Asparagine 193 carries N-linked (GlcNAc...) asparagine glycosylation. A helical membrane pass occupies residues 204–229; sequence VAFASAFACLGLLALVVTFACNLATI. Residues 230–259 lie on the Cytoplasmic side of the membrane; the sequence is KALVSRCRAKAAVSQSSAQWGRITTETAIQ. A helical transmembrane segment spans residues 260 to 283; it reads LMGIMCVLSVCWSPLLIMMLKMIF. Residues 284–303 lie on the Extracellular side of the membrane; sequence NQMSVEQCKTQMGKEKECNS. A helical transmembrane segment spans residues 304–325; the sequence is FLIAVRLASLNQILDPWVYLLL. Topologically, residues 326–365 are cytoplasmic; sequence RKILLRKFCQIRDHTNYASSSTSLPCPGSSALMWSDQLER.

It belongs to the G-protein coupled receptor 1 family. Interacts (via C-terminus) with MKLN1. Post-translationally, ligand binding is affected by cAMP-dependent phosphorylation in brain membranes. In terms of tissue distribution, detected in platelets. Kidney, uterus, and mastocytoma cells, and in a lesser amount in brain, thymus, lung, heart, stomach and spleen.

The protein localises to the cell membrane. Functionally, receptor for prostaglandin E2 (PGE2). Required for normal development of fever in response to pyrinogens, including IL1B, prostaglandin E2 and bacterial lipopolysaccharide (LPS). Required for normal potentiation of platelet aggregation by prostaglandin E2, and thus plays a role in the regulation of blood coagulation. Required for increased HCO3(-) secretion in the duodenum in response to mucosal acidification, and thereby contributes to the protection of the mucosa against acid-induced ulceration. Not required for normal kidney function, normal urine volume and osmolality. In terms of biological role, receptor for prostaglandin E2 (PGE2); ligand binding activates a signaling cascade via G(i) proteins that leads to inhibition of adenylate cyclase. Shows high agonist-independent constitutive inhibition of adenylate cyclase. Receptor for prostaglandin E2 (PGE2); ligand binding activates a signaling cascade via G(i) proteins that leads to inhibition of adenylate cyclase. Requires much higher ligand concentrations than isoform Alpha for activation. Does not display agonist-independent constitutive inhibition of adenylate cyclase. Its function is as follows. Receptor for prostaglandin E2 (PGE2); ligand binding can activate several distinct signaling cascades, resulting in activation or inhibition of adenylate cyclase. The polypeptide is Prostaglandin E2 receptor EP3 subtype (Ptger3) (Mus musculus (Mouse)).